Here is a 462-residue protein sequence, read N- to C-terminus: Hyaluronidase-1 (462 aa).

The N-terminal stretch at 1 to 52 (MLGLTQHAQKVWRMKPFSPEVSPGSSPATAGHLLRISTLFLTLLELAQVCRG) is a signal peptide. 2 disulfides stabilise this stretch: Cys-71/Cys-361 and Cys-235/Cys-249. Residues Asn-98 and Asn-127 are each glycosylated (N-linked (GlcNAc...) asparagine). Glu-159 (proton donor) is an active-site residue. N-linked (GlcNAc...) asparagine glycans are attached at residues Asn-244, Asn-265, and Asn-378. 3 disulfide bridges follow: Cys-386/Cys-397, Cys-391/Cys-446, and Cys-448/Cys-457. Residues 446–457 (CRCYRGWRGKWC) enclose the EGF-like domain.

Belongs to the glycosyl hydrolase 56 family. As to expression, highly expressed in liver, kidney, lung and skin.

It is found in the secreted. The protein resides in the lysosome. It carries out the reaction Random hydrolysis of (1-&gt;4)-linkages between N-acetyl-beta-D-glucosamine and D-glucuronate residues in hyaluronate.. May have a role in promoting tumor progression. May block the TGFB1-enhanced cell growth. The sequence is that of Hyaluronidase-1 (Hyal1) from Mus musculus (Mouse).